Reading from the N-terminus, the 125-residue chain is Large ribosomal subunit protein bL12 (125 aa).

This sequence belongs to the bacterial ribosomal protein bL12 family. As to quaternary structure, homodimer. Part of the 50S ribosomal subunit; present in 6 copies per ribosome. Forms part of the ribosomal stalk which helps the ribosome interact with GTP-bound translation factors. Forms a heptameric L10(L12)2(L12)2(L12)2 complex, where L10 forms an elongated spine to which 3 L12 dimers bind in a sequential fashion.

Its function is as follows. Forms part of the ribosomal stalk which helps the ribosome interact with GTP-bound translation factors. Is thus essential for accurate translation. In Agrobacterium fabrum (strain C58 / ATCC 33970) (Agrobacterium tumefaciens (strain C58)), this protein is Large ribosomal subunit protein bL12.